Reading from the N-terminus, the 821-residue chain is G-type lectin S-receptor-like serine/threonine-protein kinase SD2-5 (821 aa).

The signal sequence occupies residues 1–21 (MRGVFIVIVTCLVFLPDPLRA). The Extracellular segment spans residues 22 to 429 (GVASIGSITP…NGEDDGKHFP (408 aa)). Positions 33–148 (FGGSQMNYIN…DGTSIWESFD (116 aa)) constitute a Bulb-type lectin domain. N-linked (GlcNAc...) asparagine glycosylation is found at asparagine 51, asparagine 121, asparagine 174, and asparagine 248. The region spanning 280–314 (PSDLCGTPEPCGPYYVCSGSKVCGCVSGLSRARSD) is the EGF-like; atypical domain. Cystine bridges form between cysteine 284-cysteine 296 and cysteine 290-cysteine 302. Positions 323 to 411 (CKKTKDNATL…SGFVSYIKIA (89 aa)) constitute a PAN domain. N-linked (GlcNAc...) asparagine glycans are attached at residues asparagine 329, asparagine 370, and asparagine 380. 2 disulfide bridges follow: cysteine 363/cysteine 385 and cysteine 367/cysteine 373. A helical membrane pass occupies residues 430 to 450 (YVVIIVVVTVFIIAVLIFVAF). Residues 451-821 (RIHKRKKMIL…LSAVRLSGPR (371 aa)) are Cytoplasmic-facing. A Protein kinase domain is found at 493–768 (NNFSVKLGQG…KVVQMLEGVF (276 aa)). Residues 499-507 (LGQGGFGSV) and lysine 521 contribute to the ATP site. A caM-binding region spans residues 581 to 599 (KDGDVLLDWDTRFNIALGT). Residue aspartate 618 is the Proton acceptor of the active site. Residue serine 635 is modified to Phosphoserine. The residue at position 652 (threonine 652) is a Phosphothreonine.

This sequence belongs to the protein kinase superfamily. Ser/Thr protein kinase family. Interacts with PUB9, PUB13, PUB14 and PUB29.

The protein resides in the membrane. The catalysed reaction is L-seryl-[protein] + ATP = O-phospho-L-seryl-[protein] + ADP + H(+). It carries out the reaction L-threonyl-[protein] + ATP = O-phospho-L-threonyl-[protein] + ADP + H(+). This is G-type lectin S-receptor-like serine/threonine-protein kinase SD2-5 (SD25) from Arabidopsis thaliana (Mouse-ear cress).